Reading from the N-terminus, the 315-residue chain is Tetraacyldisaccharide 4'-kinase (315 aa).

An ATP-binding site is contributed by 52 to 59; the sequence is TVGGTGKT.

It belongs to the LpxK family.

It catalyses the reaction a lipid A disaccharide + ATP = a lipid IVA + ADP + H(+). Its pathway is glycolipid biosynthesis; lipid IV(A) biosynthesis; lipid IV(A) from (3R)-3-hydroxytetradecanoyl-[acyl-carrier-protein] and UDP-N-acetyl-alpha-D-glucosamine: step 6/6. In terms of biological role, transfers the gamma-phosphate of ATP to the 4'-position of a tetraacyldisaccharide 1-phosphate intermediate (termed DS-1-P) to form tetraacyldisaccharide 1,4'-bis-phosphate (lipid IVA). This Ruthia magnifica subsp. Calyptogena magnifica protein is Tetraacyldisaccharide 4'-kinase.